We begin with the raw amino-acid sequence, 518 residues long: Glutamate--cysteine ligase (518 aa).

Belongs to the glutamate--cysteine ligase type 1 family. Type 1 subfamily.

It catalyses the reaction L-cysteine + L-glutamate + ATP = gamma-L-glutamyl-L-cysteine + ADP + phosphate + H(+). Its pathway is sulfur metabolism; glutathione biosynthesis; glutathione from L-cysteine and L-glutamate: step 1/2. This chain is Glutamate--cysteine ligase, found in Shigella flexneri serotype 5b (strain 8401).